The primary structure comprises 244 residues: Glutathione S-transferase theta-2 (244 aa).

Positions 2–82 (GLELYLDLLS…YLSSKYQVAD (81 aa)) constitute a GST N-terminal domain. Glutathione contacts are provided by residues 40 to 41 (HL), 53 to 54 (KV), 66 to 67 (ES), and 104 to 107 (DNIR). The region spanning 88–230 (DLQARAQVHE…AKKTLPVPPP (143 aa)) is the GST C-terminal domain.

Belongs to the GST superfamily. Theta family. As to quaternary structure, homodimer. Highest values found in liver followed by testis, adrenal gland, kidney, lung, brain and skeletal muscle. In liver, highest expression found in central vein limiting plate hepatocytes. In lung, expressed mainly in club cells of the bronchiolar epithelium and, at low levels, in type II alveolar cells.

The protein resides in the cytoplasm. Its subcellular location is the cytosol. It localises to the nucleus. It catalyses the reaction RX + glutathione = an S-substituted glutathione + a halide anion + H(+). Functionally, catalyzes the inactivation of reactive sulfate esters in carcinogenic arylmethanols. Highest activity towards ethacrynic acid and cumene hydroperoxide. The chain is Glutathione S-transferase theta-2 (Gstt2) from Rattus norvegicus (Rat).